A 262-amino-acid polypeptide reads, in one-letter code: Adenosine deaminase RL5 (262 aa).

12 residues coordinate Cu cation: Asn-36, Tyr-40, Met-68, His-73, Cys-75, Asn-114, Cys-118, His-135, Cys-172, Cys-175, Cys-234, and Cys-237.

It belongs to the purine nucleoside phosphorylase YfiH/LACC1 family. In terms of assembly, homodimer. Cu cation is required as a cofactor.

It catalyses the reaction adenosine + phosphate = alpha-D-ribose 1-phosphate + adenine. The enzyme catalyses S-methyl-5'-thioadenosine + phosphate = 5-(methylsulfanyl)-alpha-D-ribose 1-phosphate + adenine. It carries out the reaction inosine + phosphate = alpha-D-ribose 1-phosphate + hypoxanthine. The catalysed reaction is adenosine + H2O + H(+) = inosine + NH4(+). Its function is as follows. Purine nucleoside enzyme that catalyzes the phosphorolysis of adenosine and inosine nucleosides, yielding D-ribose 1-phosphate and the respective free bases, adenine and hypoxanthine. Also catalyzes the phosphorolysis of S-methyl-5'-thioadenosine into adenine and S-methyl-5-thio-alpha-D-ribose 1-phosphate. Also has adenosine deaminase activity. Also acts as a multicopper oxidase able to oxidize a wide variety of polyphenols and related compounds in vitro. Displays substrate preference as follows: syringaldazine &gt; 2,6-dimethoxyphenol &gt; veratryl alcohol &gt; guaiacol &gt; tetramethylbenzidine &gt; 4-methoxybenzyl alcohol &gt; 2,2'-azino-bis(3-ethylbenzthiazoline-6-sulfonic acid) (ABTS) &gt;&gt; phenol red &gt; 1-hydroxybenzotriazole. Cannot use 3,4-dimetoxybenzyl alcohol and violuric acid as substrates. As this enzyme is derived from a rumen microbial community, it may have a role in the digestion of complex plant materials such as ryegrass lignin. The protein is Adenosine deaminase RL5 of Unknown prokaryotic organism.